The sequence spans 993 residues: MTWLLFRTSGALAILMVLILVHGELRIETKGQHGEDETAIQGRRRYKREWVKFAKPCREREDNSRRNPIAKITSDFQATQKITYRISGMGIDQPPFGIFVVDKNTGEINITAIVDREETPSFQITCHALNVLGQDVEKPLILTVKILDVNDNAPVFSQSIFMGEIEENSASNSLVMILNATDADEPNHLNSKIAFKIVSQEPAGTPMFLLSRHTGEVRTLTNSLDREQVSSYRLVVSGADKDGEGLSTQCECSIKVKDVNDNFPMFKESQYSAHIKENTLTSELLRFQVIDWDEEFTDNWLAVYFFTSGNEGNWFEIQTDPRTNEGILKVVKALDYEQLQSVQFSIAVKNKAEFHQSVISQYQVKSTPVTIQVVNVKEGIAFHPASKTFTVRKGISSKKLVNYVLGTYQAIDEDTNKAASYVKYVMGRNDGGLLFIDPKTAQIKFVRNIDRDSTFIVNKTITAEVLAIDENTGKTATGTIYVEVPGFNENCPTVVLEKKAICSSLRSVVVSARVPDNKYTGPYTFSLEEQSLKLPVVWSITTLNATSALLNAQQQLSPGEYTISLTVTDSQDRQCETPESLTLEVCQCDNRDICRSSNGNKDYERLDGKRPSGRLGSAAIGLLLLGLLLLLLAPLLLLTCDYGVGPIGGVTGGFIPVPDGSEGTIHQWGIEGAQPEDKEITNICVPPITTSGADFMENSEVCTNTYAGGTVVEGASGMELTTKLGAATGSGAAAGFGATAGFGAATGLGIGSAGQSGTMRTRHSTGGTNKDYGEGAISMNFLDSYFSQKAFACAEEDDVQEANDCLLIYDNEGMGAPSSPVGSLGCCSFIADELDDSFLDSLGPKFKKLAEISLGIDDEAKQSQPLSKASLSGMESCGYSLEVQQPESVRGQTLLGSQGASALSASSSVLQSATSIPNPVQHGSYMVTETYSASGSLVQPTTTVLEPLLTQNVTVTERVICPISNVSGNLQTPMELRGSRNMICTEDPCSRLI.

Positions 1-23 (MTWLLFRTSGALAILMVLILVHG) are cleaved as a signal peptide. Residues 24-48 (ELRIETKGQHGEDETAIQGRRRYKR) constitute a propeptide that is removed on maturation. Cadherin domains follow at residues 48 to 156 (REWV…APVF), 157 to 266 (SQSI…FPMF), 267 to 386 (KESQ…HPAS), and 383 to 494 (HPAS…CPTV). Topologically, residues 49 to 617 (EWVKFAKPCR…GKRPSGRLGS (569 aa)) are extracellular. N-linked (GlcNAc...) asparagine glycosylation is found at Asn109 and Asn179. N-linked (GlcNAc...) asparagine glycans are attached at residues Asn458 and Asn544. A helical membrane pass occupies residues 618–638 (AAIGLLLLGLLLLLLAPLLLL). Residues 639 to 993 (TCDYGVGPIG…CTEDPCSRLI (355 aa)) lie on the Cytoplasmic side of the membrane. A required for interaction with CTNND1 and localization at cell-cell junctions region spans residues 641-713 (DYGVGPIGGV…NTYAGGTVVE (73 aa)). Desmoglein repeat repeat units follow at residues 903–929 (LSASSSVLQSATSIPNPVQHGSYMVTE) and 930–960 (TYSASGSLVQPTTTVLEPLLTQNVTVTERVI).

As to quaternary structure, homodimer. Part of a complex that contains DSG3, PKP1, YAP1 and YWHAG; the complex is required for localization of DSG3 and YAP1 to the cell membrane in keratinocytes. Interacts with PKP2. Interacts with CTNND1; the interaction facilitates DSG3 localization and retention at cell-cell junctions. Interacts with CDH1; the interaction is required for CDH1 localization to developing adherens junctions. Interacts with RAC1; the interaction is required for DSG3 translocation to cell-cell junctions, organization of cortical F-actin bundles and actin anchoring at cell-cell junctions. Interacts with DSC3; the interaction may limit the interaction of DSC3 with p38MAPK family members and therefore repress p38MAPK signaling activation.

The protein localises to the cell membrane. Its subcellular location is the cell junction. It localises to the desmosome. The protein resides in the cytoplasm. It is found in the tight junction. In terms of biological role, a component of desmosome cell-cell junctions which are required for positive regulation of cellular adhesion. Required for adherens and desmosome junction assembly in response to mechanical force in keratinocytes. Required for desmosome-mediated cell-cell adhesion of cells surrounding the telogen hair club and the basal layer of the outer root sheath epithelium, consequently is essential for the anchoring of telogen hairs in the hair follicle. Required for the maintenance of the epithelial barrier via promoting desmosome-mediated intercellular attachment of suprabasal epithelium to basal cells. May play a role in the protein stability of the desmosome plaque components DSP, JUP, PKP1, PKP2 and PKP3. Required for YAP1 localization at the plasma membrane in keratinocytes in response to mechanical strain, via the formation of an interaction complex composed of DSG3, PKP1 and YWHAG. May also be involved in the positive regulation of YAP1 target gene transcription and as a result cell proliferation. Positively regulates cellular contractility and cell junction formation via organization of cortical F-actin bundles and anchoring of actin to tight junctions, in conjunction with RAC1. The cytoplasmic pool of DSG3 is required for the localization of CDH1 and CTNNB1 at developing adherens junctions, potentially via modulation of SRC activity. Inhibits keratinocyte migration via suppression of p38MAPK signaling, may therefore play a role in moderating wound healing. The protein is Desmoglein-3 (DSG3) of Canis lupus familiaris (Dog).